The sequence spans 570 residues: Urease subunit alpha (570 aa).

Residues 132 to 570 form the Urease domain; it reads GGIDTHVHFL…VPMARRYFLF (439 aa). Ni(2+) is bound by residues His-137, His-139, and Lys-220. Lys-220 carries the N6-carboxylysine modification. His-222 provides a ligand contact to substrate. Residues His-249 and His-275 each contribute to the Ni(2+) site. His-323 serves as the catalytic Proton donor. Asp-363 is a Ni(2+) binding site.

It belongs to the metallo-dependent hydrolases superfamily. Urease alpha subunit family. As to quaternary structure, heterotrimer of UreA (gamma), UreB (beta) and UreC (alpha) subunits. Three heterotrimers associate to form the active enzyme. Requires Ni cation as cofactor. Post-translationally, carboxylation allows a single lysine to coordinate two nickel ions.

It localises to the cytoplasm. It carries out the reaction urea + 2 H2O + H(+) = hydrogencarbonate + 2 NH4(+). Its pathway is nitrogen metabolism; urea degradation; CO(2) and NH(3) from urea (urease route): step 1/1. The protein is Urease subunit alpha of Corynebacterium glutamicum (strain ATCC 13032 / DSM 20300 / JCM 1318 / BCRC 11384 / CCUG 27702 / LMG 3730 / NBRC 12168 / NCIMB 10025 / NRRL B-2784 / 534).